Here is a 144-residue protein sequence, read N- to C-terminus: Maximins 6/H10 (144 aa).

An N-terminal signal peptide occupies residues Met-1–Ala-18. Residues Arg-19–Arg-43 constitute a propeptide that is removed on maturation. At Asn-70 the chain carries Asparagine amide. The propeptide occupies Thr-74 to Arg-123. Leu-143 is modified (leucine amide).

It belongs to the bombinin family. As to expression, expressed by the skin glands.

Its subcellular location is the secreted. Maximin-6 shows antimicrobial activity against bacteria and against the fungus C.albicans. It has little hemolytic activity. In terms of biological role, maximin-H10 shows antimicrobial activity against bacteria and against the fungus C.albicans. Shows strong hemolytic activity. The protein is Maximins 6/H10 of Bombina maxima (Giant fire-bellied toad).